We begin with the raw amino-acid sequence, 665 residues long: DNA mismatch repair protein MutL (665 aa).

Composition is skewed to polar residues over residues 348-361 and 407-421; these read LEATAASNPDNGLS and PSSQGDYQPQDNSRY. Disordered stretches follow at residues 348–370 and 385–445; these read LEATAASNPDNGLSPSRGHAEEG and VHRG…STSA. Low complexity predominate over residues 426 to 445; sequence YSTNAASTNTASNYSHSTSA.

Belongs to the DNA mismatch repair MutL/HexB family.

Its function is as follows. This protein is involved in the repair of mismatches in DNA. It is required for dam-dependent methyl-directed DNA mismatch repair. May act as a 'molecular matchmaker', a protein that promotes the formation of a stable complex between two or more DNA-binding proteins in an ATP-dependent manner without itself being part of a final effector complex. The chain is DNA mismatch repair protein MutL from Shewanella denitrificans (strain OS217 / ATCC BAA-1090 / DSM 15013).